The following is a 312-amino-acid chain: Methionyl-tRNA formyltransferase (312 aa).

109 to 112 lines the (6S)-5,6,7,8-tetrahydrofolate pocket; the sequence is SLLP.

The protein belongs to the Fmt family.

It carries out the reaction L-methionyl-tRNA(fMet) + (6R)-10-formyltetrahydrofolate = N-formyl-L-methionyl-tRNA(fMet) + (6S)-5,6,7,8-tetrahydrofolate + H(+). In terms of biological role, attaches a formyl group to the free amino group of methionyl-tRNA(fMet). The formyl group appears to play a dual role in the initiator identity of N-formylmethionyl-tRNA by promoting its recognition by IF2 and preventing the misappropriation of this tRNA by the elongation apparatus. This Ruminiclostridium cellulolyticum (strain ATCC 35319 / DSM 5812 / JCM 6584 / H10) (Clostridium cellulolyticum) protein is Methionyl-tRNA formyltransferase.